A 248-amino-acid chain; its full sequence is Type III pantothenate kinase (248 aa).

6–13 is an ATP binding site; it reads DIGNTETK. 103–106 lines the substrate pocket; sequence GSDR. The Proton acceptor role is filled by D105. D124 serves as a coordination point for K(+). Residue T127 participates in ATP binding. Position 178 (T178) interacts with substrate.

It belongs to the type III pantothenate kinase family. Homodimer. The cofactor is NH4(+). It depends on K(+) as a cofactor.

It localises to the cytoplasm. The catalysed reaction is (R)-pantothenate + ATP = (R)-4'-phosphopantothenate + ADP + H(+). Its pathway is cofactor biosynthesis; coenzyme A biosynthesis; CoA from (R)-pantothenate: step 1/5. Functionally, catalyzes the phosphorylation of pantothenate (Pan), the first step in CoA biosynthesis. This chain is Type III pantothenate kinase, found in Pelagibacter ubique (strain HTCC1062).